The primary structure comprises 219 residues: Pyridoxine/pyridoxamine 5'-phosphate oxidase (219 aa).

Residues 1–23 (MTSSVIPPSPSAADYAAEGDRPL) form a disordered region. FMN-binding positions include 66-71 (RIVLLK), 81-82 (FT), Lys88, and Gln110. Lys71 contacts substrate. Substrate contacts are provided by Tyr128, Arg132, and Ser136. FMN contacts are provided by residues 145–146 (QS) and Trp191. A substrate-binding site is contributed by 197–199 (RMH). Arg201 is an FMN binding site.

This sequence belongs to the pyridoxamine 5'-phosphate oxidase family. As to quaternary structure, homodimer. FMN is required as a cofactor.

It carries out the reaction pyridoxamine 5'-phosphate + O2 + H2O = pyridoxal 5'-phosphate + H2O2 + NH4(+). The enzyme catalyses pyridoxine 5'-phosphate + O2 = pyridoxal 5'-phosphate + H2O2. The protein operates within cofactor metabolism; pyridoxal 5'-phosphate salvage; pyridoxal 5'-phosphate from pyridoxamine 5'-phosphate: step 1/1. It functions in the pathway cofactor metabolism; pyridoxal 5'-phosphate salvage; pyridoxal 5'-phosphate from pyridoxine 5'-phosphate: step 1/1. Functionally, catalyzes the oxidation of either pyridoxine 5'-phosphate (PNP) or pyridoxamine 5'-phosphate (PMP) into pyridoxal 5'-phosphate (PLP). The sequence is that of Pyridoxine/pyridoxamine 5'-phosphate oxidase from Hyphomonas neptunium (strain ATCC 15444).